The chain runs to 281 residues: Trypsin zeta (281 aa).

A signal peptide spans 1-23 (MSSSSWLGCLLAVLLSALALSQG). Positions 24-39 (LPLLEDLDENSFPDGR) are cleaved as a propeptide — activation peptide. A Peptidase S1 domain is found at 40–279 (IVGGYVTDIA…LRPWIDAVRA (240 aa)). The cysteines at positions 73 and 89 are disulfide-linked. Catalysis depends on charge relay system residues His88 and Asp135. Disulfide bonds link Cys199–Cys219 and Cys231–Cys255. Ser235 serves as the catalytic Charge relay system.

The protein belongs to the peptidase S1 family.

It is found in the secreted. Its subcellular location is the extracellular space. The catalysed reaction is Preferential cleavage: Arg-|-Xaa, Lys-|-Xaa.. The sequence is that of Trypsin zeta (zetaTry) from Drosophila erecta (Fruit fly).